The following is a 768-amino-acid chain: Transferrin receptor protein 1 (768 aa).

Topologically, residues 1–68 (MMDQARSAFS…VAKPKRLNGY (68 aa)) are cytoplasmic. Residues 1-70 (MMDQARSAFS…KPKRLNGYVC (70 aa)) are mediates interaction with SH3BP4. Phosphoserine is present on residues serine 10 and serine 19. A Phosphotyrosine modification is found at tyrosine 20. The Endocytosis signal signature appears at 20–23 (YTRF). Threonine 21 is modified (phosphothreonine). Serine 24 carries the phosphoserine modification. Positions 61-64 (KPKR) match the Stop-transfer sequence motif. Residues 69 to 89 (VCYGIIAVITFFLIGFMIGYL) form a helical membrane-spanning segment. The S-palmitoyl cysteine moiety is linked to residue cysteine 70. Topologically, residues 90–768 (AYCKRVESKT…GDIWDIDNEF (679 aa)) are extracellular. The 91-residue stretch at 231 to 321 (SKATTVTGKL…GTGDPYTPGF (91 aa)) folds into the PA domain. N-linked (GlcNAc...) asparagine glycosylation is found at asparagine 259 and asparagine 325. The tract at residues 577-768 (TMDTYDVLSK…GDIWDIDNEF (192 aa)) is ligand-binding. A Cell attachment site motif is present at residues 654-656 (RGD). N-linked (GlcNAc...) asparagine glycans are attached at residues asparagine 730 and asparagine 735.

This sequence belongs to the peptidase M28 family. M28B subfamily. Homodimer; disulfide-linked. Binds one transferrin or HFE molecule per subunit. Interacts with SH3BP4. Interacts with SH3BP3. Interacts with STEAP3; facilitates TFRC endocytosis in erythroid precursor cells. Stearoylated by ZDHHC6 which inhibits TFRC-mediated activation of the JNK pathway and promotes mitochondrial fragmentation. Stearoylation does not affect iron uptake.

It is found in the cell membrane. It localises to the melanosome. In terms of biological role, cellular uptake of iron occurs via receptor-mediated endocytosis of ligand-occupied transferrin receptor into specialized endosomes. Endosomal acidification leads to iron release. The apotransferrin-receptor complex is then recycled to the cell surface with a return to neutral pH and the concomitant loss of affinity of apotransferrin for its receptor. Transferrin receptor is necessary for development of erythrocytes and the nervous system. Positively regulates T and B cell proliferation through iron uptake. Acts as a lipid sensor that regulates mitochondrial fusion by regulating activation of the JNK pathway. When dietary levels of stearate (C18:0) are low, promotes activation of the JNK pathway, resulting in HUWE1-mediated ubiquitination and subsequent degradation of the mitofusin MFN2 and inhibition of mitochondrial fusion. When dietary levels of stearate (C18:0) are high, TFRC stearoylation inhibits activation of the JNK pathway and thus degradation of the mitofusin MFN2. Mediates uptake of NICOL1 into fibroblasts where it may regulate extracellular matrix production. This Sus scrofa (Pig) protein is Transferrin receptor protein 1 (TFRC).